We begin with the raw amino-acid sequence, 198 residues long: Nucleoside triphosphate pyrophosphatase (198 aa).

Catalysis depends on D72, which acts as the Proton acceptor.

The protein belongs to the Maf family. Requires a divalent metal cation as cofactor.

Its subcellular location is the cytoplasm. The enzyme catalyses a ribonucleoside 5'-triphosphate + H2O = a ribonucleoside 5'-phosphate + diphosphate + H(+). It catalyses the reaction a 2'-deoxyribonucleoside 5'-triphosphate + H2O = a 2'-deoxyribonucleoside 5'-phosphate + diphosphate + H(+). In terms of biological role, nucleoside triphosphate pyrophosphatase. May have a dual role in cell division arrest and in preventing the incorporation of modified nucleotides into cellular nucleic acids. The protein is Nucleoside triphosphate pyrophosphatase of Corynebacterium diphtheriae (strain ATCC 700971 / NCTC 13129 / Biotype gravis).